Here is a 223-residue protein sequence, read N- to C-terminus: Killer cell lectin-like receptor subfamily B member 1A (223 aa).

Topologically, residues 1 to 43 are cytoplasmic; that stretch reads MDTARVYLSLKPSKTAAGAQCVSPPSLPPDACRCPRSHRLALK. Residues 32–35 carry the LCK-binding motif motif; sequence CRCP. A helical; Signal-anchor for type II membrane protein membrane pass occupies residues 44–63; that stretch reads LSCAGLILLVLALVGMSILV. At 64-223 the chain is on the extracellular side; the sequence is RVLVQKPSVE…LKCECMCNDS (160 aa). The 120-residue stretch at 93–212 folds into the C-type lectin domain; it reads KCPKDWLSHR…DSDNIWVCQK (120 aa). 3 disulfides stabilise this stretch: Cys94-Cys105, Cys122-Cys210, and Cys189-Cys202.

In terms of assembly, homodimer; disulfide-linked. Interacts with tyrosine kinase LCK. As to expression, expressed in natural killer cells.

The protein localises to the membrane. Its function is as follows. Plays a stimulatory role on natural killer (NK) cell cytotoxicity. In Rattus norvegicus (Rat), this protein is Killer cell lectin-like receptor subfamily B member 1A (Klrb1a).